The primary structure comprises 426 residues: Serine--tRNA ligase (426 aa).

An L-serine-binding site is contributed by 228–230; it reads TSE. Residues 259–261 and Val275 each bind ATP; that span reads RRE. Glu282 is an L-serine binding site. 346-349 contributes to the ATP binding site; it reads ELTS. Thr386 contacts L-serine.

It belongs to the class-II aminoacyl-tRNA synthetase family. Type-1 seryl-tRNA synthetase subfamily. Homodimer. The tRNA molecule binds across the dimer.

It localises to the cytoplasm. It carries out the reaction tRNA(Ser) + L-serine + ATP = L-seryl-tRNA(Ser) + AMP + diphosphate + H(+). The catalysed reaction is tRNA(Sec) + L-serine + ATP = L-seryl-tRNA(Sec) + AMP + diphosphate + H(+). It participates in aminoacyl-tRNA biosynthesis; selenocysteinyl-tRNA(Sec) biosynthesis; L-seryl-tRNA(Sec) from L-serine and tRNA(Sec): step 1/1. In terms of biological role, catalyzes the attachment of serine to tRNA(Ser). Is also able to aminoacylate tRNA(Sec) with serine, to form the misacylated tRNA L-seryl-tRNA(Sec), which will be further converted into selenocysteinyl-tRNA(Sec). This is Serine--tRNA ligase from Arthrobacter sp. (strain FB24).